The sequence spans 602 residues: MSSMRTHYCGLVTEQFSGQEVALTGWVQRRRDHGGVIFIDLRDREGLVQVVCDPDRPEMFKAAEEIRNEFCIRVTGKVRPRPAGTENANLTSGKIEVLCHELTVLNPSVTPPFQLDDDNLSETTRLTHRVLDLRRPQMQYNLRLRYKVAMEVRKFLDAQGFIDIETPMLGKSTPEGARDYLVPSRVNPGHFFALPQSPQIFKQMLMVSGFDRYYQITKCFRDEDLRADRQPEFTQIDCETSFLTEQEIRDLFEDMMRTVFKNAIDVDLDARFPVMEFREAMARFGSDKPDLRVKLEFTELTEVMKDVDFKVFSSPANSDNGRVVGLRVPGGGAISRGEIDAYTQFVGIYGAKGLAWIKVNEVAKGRDGLQSPIVKNLHDAAIAEILKRTGAQDGDIIFFGADKAKVVNDSIGALRLKIGHSDFGKANGLFEDTWKPLWVVDFPMFEYDEEDARWVAMHHPFTSPKDEHLEYLETDPGKCLAKAYDMVLNGWEMGGGSVRIFRSDIQSKVFRALNINDDEARAKFGYLLDALQYGAPPHGGLAFGLDRIVTMMAGADSIRDVIAFPKTQRAQDLLTQAPSSVDEKQLRELHIRLRATEPKPTA.

Glu-175 lines the L-aspartate pocket. Residues 199 to 202 (QIFK) form an aspartate region. L-aspartate is bound at residue Arg-221. ATP is bound by residues 221-223 (RDE) and Gln-230. His-458 contributes to the L-aspartate binding site. Glu-492 is an ATP binding site. Arg-499 is a binding site for L-aspartate. 544–547 (GLDR) is an ATP binding site.

Belongs to the class-II aminoacyl-tRNA synthetase family. Type 1 subfamily. Homodimer.

It localises to the cytoplasm. It catalyses the reaction tRNA(Asx) + L-aspartate + ATP = L-aspartyl-tRNA(Asx) + AMP + diphosphate. Aspartyl-tRNA synthetase with relaxed tRNA specificity since it is able to aspartylate not only its cognate tRNA(Asp) but also tRNA(Asn). Reaction proceeds in two steps: L-aspartate is first activated by ATP to form Asp-AMP and then transferred to the acceptor end of tRNA(Asp/Asn). This Cupriavidus necator (strain ATCC 17699 / DSM 428 / KCTC 22496 / NCIMB 10442 / H16 / Stanier 337) (Ralstonia eutropha) protein is Aspartate--tRNA(Asp/Asn) ligase.